The sequence spans 311 residues: Ribosomal RNA large subunit methyltransferase F (311 aa).

Belongs to the methyltransferase superfamily. METTL16/RlmF family.

It is found in the cytoplasm. The catalysed reaction is adenosine(1618) in 23S rRNA + S-adenosyl-L-methionine = N(6)-methyladenosine(1618) in 23S rRNA + S-adenosyl-L-homocysteine + H(+). Its function is as follows. Specifically methylates the adenine in position 1618 of 23S rRNA. The polypeptide is Ribosomal RNA large subunit methyltransferase F (Pectobacterium atrosepticum (strain SCRI 1043 / ATCC BAA-672) (Erwinia carotovora subsp. atroseptica)).